A 1096-amino-acid chain; its full sequence is Inactive phospholipase C-like protein 1 (1096 aa).

A disordered region spans residues 1–101; that stretch reads MAEGAASREA…KKTVSFSSMP (101 aa). Serine 48 is modified (phosphoserine). Over residues 49–60 the composition is skewed to low complexity; that stretch reads GVALPGAAGVPA. Serine 78 carries the post-translational modification Phosphoserine. Residues 83 to 222 form an interaction with PPP1C region; sequence PSNQKCGGRK…NIWVSGLRYL (140 aa). A Phosphothreonine modification is found at threonine 94. Threonine 94 bears the Phosphothreonine; by PKA mark. At serine 96 the chain carries Phosphoserine; by PKA. In terms of domain architecture, PH spans 114–224; it reads SFMQAGCELK…WVSGLRYLVS (111 aa). The region spanning 399–543 is the PI-PLC X-box domain; that stretch reads QDMTQPLSHY…LKNMIIVKGK (145 aa). The interaction with GABA A beta subunit stretch occupies residues 544 to 568; sequence KLPSESDLLEGEVTDEDEEAEMSRR. Positions 550 to 563 are enriched in acidic residues; sequence DLLEGEVTDEDEEA. Positions 550–569 are disordered; sequence DLLEGEVTDEDEEAEMSRRM. A Phosphothreonine modification is found at threonine 557. At serine 570 the chain carries Phosphoserine. One can recognise a PI-PLC Y-box domain in the interval 586-702; sequence LSDLVSICKS…GYVLRPSIMR (117 aa). Residues 702–831 enclose the C2 domain; that stretch reads RDEVSYFSAN…PGYRHVPLRS (130 aa). A coiled-coil region spans residues 1040–1060; it reads DLLKNAKNEAVENIKQIQLAC. Residues 1067–1096 form a disordered region; the sequence is KGPGGGSEAKGKRSLEAIEEKESSEENGKL. Residues 1075-1096 show a composition bias toward basic and acidic residues; it reads AKGKRSLEAIEEKESSEENGKL. Serine 1080 is subject to Phosphoserine.

In terms of assembly, interacts with PPP2CA, Ins(1,4,5)P3, Ins(1,4,5,6)P4 GABARAP, GABA receptor beta subunits, GABA receptor gamma-2 subunits and PPP1C. May form a ternary complex with GABA receptor beta subunit and GABARAP. The formation of a ternary complex with GABA receptor beta subunit and GABARAP could be the key step for facilitating the association of GABARAP with the GABA receptor gamma-2 subunit and to allow it to be transported at the right destination. Post-translationally, phosphorylated by the catalytic subunit of PKA. Phosphorylation of Thr-94 resulted in dissociation of PPP1C from PRIP1.

The protein resides in the cytoplasm. Involved in an inositol phospholipid-based intracellular signaling cascade. Shows no PLC activity to phosphatidylinositol 4,5-bisphosphate and phosphatidylinositol. Component in the phospho-dependent endocytosis process of GABA A receptor. Acts as an inhibitor of PPP1C. Involved in the assembly and/or the trafficking of gamma-2 subunit-containing GABA A receptors. In Mus musculus (Mouse), this protein is Inactive phospholipase C-like protein 1 (Plcl1).